We begin with the raw amino-acid sequence, 318 residues long: Nucleotide-binding protein Jann_0539 (318 aa).

17–24 (GPSGAGRS) serves as a coordination point for ATP. 64–67 (DPRT) lines the GTP pocket. Positions 278–318 (GWQVSKRHRDVDKDASENSDRDRGASARTAASTDDGEAEQP) are disordered. A compositionally biased stretch (basic and acidic residues) spans 286–302 (RDVDKDASENSDRDRGA).

It belongs to the RapZ-like family.

Displays ATPase and GTPase activities. The chain is Nucleotide-binding protein Jann_0539 from Jannaschia sp. (strain CCS1).